A 396-amino-acid chain; its full sequence is Putative N(4)-(beta-N-acetylglucosaminyl)-L-asparaginase GG24090 (396 aa).

Residues M1–A23 form the signal peptide. 2 disulfides stabilise this stretch: C100–C105 and C199–C215. The active-site Nucleophile is T246. Residues R274–D277 and T297–G300 each bind substrate. C357 and C384 are oxidised to a cystine.

It belongs to the Ntn-hydrolase family. In terms of assembly, heterotetramer of two alpha and two beta chains arranged as a dimer of alpha/beta heterodimers. Post-translationally, cleaved into an alpha and beta chain by autocatalysis; this activates the enzyme. The N-terminal residue of the beta subunit is responsible for the nucleophile hydrolase activity.

The catalysed reaction is N(4)-(beta-N-acetyl-D-glucosaminyl)-L-asparagine + H2O = N-acetyl-beta-D-glucosaminylamine + L-aspartate + H(+). In terms of biological role, cleaves the GlcNAc-Asn bond which joins oligosaccharides to the peptide of asparagine-linked glycoproteins. The polypeptide is Putative N(4)-(beta-N-acetylglucosaminyl)-L-asparaginase GG24090 (Drosophila erecta (Fruit fly)).